The sequence spans 484 residues: tRNA sulfurtransferase (484 aa).

A THUMP domain is found at 63-167 (QGIRERLSCM…DQRLFVVHDQ (105 aa)). ATP contacts are provided by residues 185–186 (LM), lysine 267, glycine 289, and glutamine 298. A disulfide bridge links cysteine 346 with cysteine 457. The Rhodanese domain maps to 405 to 483 (ALAGQVILDI…GHANVRVYRP (79 aa)). Cysteine 457 acts as the Cysteine persulfide intermediate in catalysis.

This sequence belongs to the ThiI family.

It is found in the cytoplasm. The enzyme catalyses [ThiI sulfur-carrier protein]-S-sulfanyl-L-cysteine + a uridine in tRNA + 2 reduced [2Fe-2S]-[ferredoxin] + ATP + H(+) = [ThiI sulfur-carrier protein]-L-cysteine + a 4-thiouridine in tRNA + 2 oxidized [2Fe-2S]-[ferredoxin] + AMP + diphosphate. It carries out the reaction [ThiS sulfur-carrier protein]-C-terminal Gly-Gly-AMP + S-sulfanyl-L-cysteinyl-[cysteine desulfurase] + AH2 = [ThiS sulfur-carrier protein]-C-terminal-Gly-aminoethanethioate + L-cysteinyl-[cysteine desulfurase] + A + AMP + 2 H(+). It functions in the pathway cofactor biosynthesis; thiamine diphosphate biosynthesis. Catalyzes the ATP-dependent transfer of a sulfur to tRNA to produce 4-thiouridine in position 8 of tRNAs, which functions as a near-UV photosensor. Also catalyzes the transfer of sulfur to the sulfur carrier protein ThiS, forming ThiS-thiocarboxylate. This is a step in the synthesis of thiazole, in the thiamine biosynthesis pathway. The sulfur is donated as persulfide by IscS. The chain is tRNA sulfurtransferase from Pseudomonas syringae pv. syringae (strain B728a).